Reading from the N-terminus, the 691-residue chain is Elongation factor G (691 aa).

In terms of domain architecture, tr-type G spans 8–283 (EDYRNFGIMA…AVVDYLPSPI (276 aa)). Residues 17–24 (AHIDAGKT), 81–85 (DTPGH), and 135–138 (NKMD) contribute to the GTP site.

Belongs to the TRAFAC class translation factor GTPase superfamily. Classic translation factor GTPase family. EF-G/EF-2 subfamily.

It is found in the cytoplasm. In terms of biological role, catalyzes the GTP-dependent ribosomal translocation step during translation elongation. During this step, the ribosome changes from the pre-translocational (PRE) to the post-translocational (POST) state as the newly formed A-site-bound peptidyl-tRNA and P-site-bound deacylated tRNA move to the P and E sites, respectively. Catalyzes the coordinated movement of the two tRNA molecules, the mRNA and conformational changes in the ribosome. The sequence is that of Elongation factor G from Methylocella silvestris (strain DSM 15510 / CIP 108128 / LMG 27833 / NCIMB 13906 / BL2).